Here is a 145-residue protein sequence, read N- to C-terminus: D-aminoacyl-tRNA deacylase (145 aa).

A Gly-cisPro motif, important for rejection of L-amino acids motif is present at residues glycine 137–proline 138.

It belongs to the DTD family. As to quaternary structure, homodimer.

The protein resides in the cytoplasm. It carries out the reaction glycyl-tRNA(Ala) + H2O = tRNA(Ala) + glycine + H(+). It catalyses the reaction a D-aminoacyl-tRNA + H2O = a tRNA + a D-alpha-amino acid + H(+). An aminoacyl-tRNA editing enzyme that deacylates mischarged D-aminoacyl-tRNAs. Also deacylates mischarged glycyl-tRNA(Ala), protecting cells against glycine mischarging by AlaRS. Acts via tRNA-based rather than protein-based catalysis; rejects L-amino acids rather than detecting D-amino acids in the active site. By recycling D-aminoacyl-tRNA to D-amino acids and free tRNA molecules, this enzyme counteracts the toxicity associated with the formation of D-aminoacyl-tRNA entities in vivo and helps enforce protein L-homochirality. In Erwinia tasmaniensis (strain DSM 17950 / CFBP 7177 / CIP 109463 / NCPPB 4357 / Et1/99), this protein is D-aminoacyl-tRNA deacylase.